We begin with the raw amino-acid sequence, 220 residues long: Chalcone--flavanone isomerase B (220 aa).

Substrate-binding residues include Thr-50, Asn-115, and Thr-192.

This sequence belongs to the chalcone isomerase family.

The catalysed reaction is a chalcone = a flavanone.. It participates in secondary metabolite biosynthesis; flavonoid biosynthesis. Its function is as follows. Catalyzes the intramolecular cyclization of bicyclic chalcones into tricyclic (S)-flavanones. Responsible for the isomerization of 4,2',4',6'-tetrahydroxychalcone (also termed chalcone) into naringenin. The polypeptide is Chalcone--flavanone isomerase B (CHI2) (Petunia hybrida (Petunia)).